The following is a 316-amino-acid chain: Large ribosomal subunit protein uL10 (316 aa).

Residues 282-316 form a disordered region; sequence ASAAKADEPKKEEAKKVEEEEEEEEDGFMGFGMFD. Over residues 286-299 the composition is skewed to basic and acidic residues; sequence KADEPKKEEAKKVE.

Belongs to the universal ribosomal protein uL10 family. As to quaternary structure, P0 forms a pentameric complex by interaction with dimers of P1 and P2. In terms of processing, phosphorylated.

Ribosomal protein P0 is the functional equivalent of E.coli protein L10. In Plasmodium falciparum (isolate 7G8), this protein is Large ribosomal subunit protein uL10 (RPLP0).